The primary structure comprises 310 residues: Ribosomal protein uL3 glutamine methyltransferase (310 aa).

This sequence belongs to the protein N5-glutamine methyltransferase family. PrmB subfamily.

It carries out the reaction L-glutaminyl-[ribosomal protein uL3] + S-adenosyl-L-methionine = N(5)-methyl-L-glutaminyl-[ribosomal protein uL3] + S-adenosyl-L-homocysteine + H(+). Methylates large ribosomal subunit protein uL3 on a specific glutamine residue. This is Ribosomal protein uL3 glutamine methyltransferase from Yersinia pestis.